Here is a 688-residue protein sequence, read N- to C-terminus: UvrABC system protein C (688 aa).

The segment covering 1–14 (MSPLDQKNKPRGGA) has biased composition (basic and acidic residues). A disordered region spans residues 1–20 (MSPLDQKNKPRGGADDLPPE). The 79-residue stretch at 71 to 149 (NAPGVYRMMN…IKRLRPRFNV (79 aa)) folds into the GIY-YIG domain. One can recognise a UVR domain in the interval 259–294 (QKVKTEISAAMQQASEDLDFERAAIYRDRLAALSHV).

It belongs to the UvrC family. In terms of assembly, interacts with UvrB in an incision complex.

It is found in the cytoplasm. Functionally, the UvrABC repair system catalyzes the recognition and processing of DNA lesions. UvrC both incises the 5' and 3' sides of the lesion. The N-terminal half is responsible for the 3' incision and the C-terminal half is responsible for the 5' incision. The protein is UvrABC system protein C of Mesorhizobium japonicum (strain LMG 29417 / CECT 9101 / MAFF 303099) (Mesorhizobium loti (strain MAFF 303099)).